We begin with the raw amino-acid sequence, 542 residues long: Formate--tetrahydrofolate ligase (542 aa).

53–60 is an ATP binding site; that stretch reads TPAGEGKT.

The protein belongs to the formate--tetrahydrofolate ligase family.

It catalyses the reaction (6S)-5,6,7,8-tetrahydrofolate + formate + ATP = (6R)-10-formyltetrahydrofolate + ADP + phosphate. It functions in the pathway one-carbon metabolism; tetrahydrofolate interconversion. This chain is Formate--tetrahydrofolate ligase, found in Thermotoga maritima (strain ATCC 43589 / DSM 3109 / JCM 10099 / NBRC 100826 / MSB8).